The primary structure comprises 848 residues: MNLESTATSAEYWSDLADALNTPMMKQFLAIKKDFPDTILFFRMGDFYEMFLEDAKIASSILDIALTKRQNAVPMCGIPYHSKDNYISRLLNAGKKIAICEQSKPEEAGSKLMTRDVVRIITPGTVIEENLLSGFQNNYLAVLHLKKSLIYFAIADFSTGEVFYSSVSVTGLERLIAELEKFKPSEICVPKSEHTFFQELEYFKNREFTVLKNQIETSEKDSFQVLSKYLNEYIRETYRDNKLVLREPKILSSGKFLEMDRETIRNLELVENEKEKNNTLYSIFNFCNTAKGKRLLKQRILFPECDPVVLYSRWEKQDILLKTVLAPYITALKDFGDLERILTRFRGNHAYPRDFRSLLNSISSGIKLKEELEKVSYPFLIPIEELKKISDFIQERLHPGDDLPVILGNGIFLKKGFSQKLDQAREAGVKGKDWILDLETKEKKRTGLNTLKIRYNKIVGYFIEISRAQAEQAPKDYLKKQTLVGSERFTMPKLEEIERTILEADEIIQEIERTEFNRMVEEVLKFSSSLLSFSEEIGDLDFQISLLTAKDKFGWIRPKLSEDRSLDLSDSRHPVVEATLPPGQEFIPNSVYLDTQDKAIAVLTGPNMAGKSTFMRQIALNQILFQIGAFVPAKSAKLPIVDKLFTRIGAGDNLTAGESTFFVEMKETANILNHYTEDSLILFDEVGRGTSTYDGMSIAWSILEYLSSLSVRPKTIFATHYHELTELSRLGGIFNLYLETLEKEDRVLFLRKVKVGKAKKSFGIYVAKIAGVPEPIVKRAAELLTDLESKKKEIKIQEAQPTLFTEPETKNFNSQTEESILKLKLEEMTPIEALKTLEDFQKKLRKQK.

ATP is bound at residue 605 to 612; sequence GPNMAGKS.

It belongs to the DNA mismatch repair MutS family.

Its function is as follows. This protein is involved in the repair of mismatches in DNA. It is possible that it carries out the mismatch recognition step. This protein has a weak ATPase activity. The protein is DNA mismatch repair protein MutS of Leptospira interrogans serogroup Icterohaemorrhagiae serovar Lai (strain 56601).